The primary structure comprises 277 residues: Sulfur carrier protein FdhD (277 aa).

Cysteine 121 acts as the Cysteine persulfide intermediate in catalysis. Residue phenylalanine 260 to arginine 265 coordinates Mo-bis(molybdopterin guanine dinucleotide).

Belongs to the FdhD family.

The protein resides in the cytoplasm. Functionally, required for formate dehydrogenase (FDH) activity. Acts as a sulfur carrier protein that transfers sulfur from IscS to the molybdenum cofactor prior to its insertion into FDH. In Escherichia coli O8 (strain IAI1), this protein is Sulfur carrier protein FdhD.